Consider the following 782-residue polypeptide: Zinc finger protein 786 (782 aa).

The 72-residue stretch at 9–80 (LTFEDVAIYF…WRESQKSGNI (72 aa)) folds into the KRAB domain. The interval 141–164 (PQRHDARAPPPLACGPSESTLKEG) is disordered. The C2H2-type 1; degenerate zinc-finger motif lies at 192 to 209 (CGESCWENNHLVMHQRGH). A C2H2-type 2 zinc finger spans residues 240-262 (FRCGVCGKSFRRKLCLLRHLAAH). The segment at 285–364 (SHRLPQQGEK…EGDTEALQHG (80 aa)) is disordered. Residues 369–391 (CSCSECGERSPMSARLASPCRAH) form a C2H2-type 3; degenerate zinc finger. C2H2-type zinc fingers lie at residues 397 to 419 (FQCAHCTKRFRLRRLLQVHQHAH), 425 to 447 (FSCRKCGKGFAKQCKLTEHIRVH), and 453 to 475 (FRCAKCGRNFRQRGQLLRHQRLH). A C2H2-type 7; degenerate zinc finger spans residues 481-503 (FQCPECGLSFRLESMLRAHRLRH). C2H2-type zinc fingers lie at residues 509-531 (FSCSECGRGFTHQCKLREHLRVH), 537-559 (FQCLKCDKRFRLKGILKAHQHTH), 565-587 (FSCGECGKGFTRQSKLTEHLRVH), 593-615 (FQCPECNRSFRLKGQLLSHQRLH), 621-643 (FQCPECDKRYRVKADMKAHQLLH), 649-670 (FSCECGKGFVKHSKLIEHIRTH), 676-698 (FQCPKCDKSFRLKAQLLSHQGLH), 704-726 (FHCPECDKNFRERGHMLRHQRIH), and 732-754 (FACGDCGKGFIYKSKLAEHIRVH).

The protein belongs to the krueppel C2H2-type zinc-finger protein family.

The protein resides in the nucleus. Functionally, may be involved in transcriptional regulation. The polypeptide is Zinc finger protein 786 (ZNF786) (Homo sapiens (Human)).